Here is a 198-residue protein sequence, read N- to C-terminus: Synaptobrevin homolog YKT6-A (198 aa).

Residues 8 to 127 form the Longin domain; that stretch reads VLYKGENKVH…IQYNALDSYL (120 aa). In terms of domain architecture, v-SNARE coiled-coil homology spans 138–198; that stretch reads PMSKVQAELD…RKQNSCCDIM (61 aa). A lipid anchor (S-palmitoyl cysteine) is attached at Cys194. A Cysteine methyl ester modification is found at Cys195. Residue Cys195 is the site of S-farnesyl cysteine attachment. The propeptide at 196 to 198 is removed in mature form; sequence DIM.

This sequence belongs to the synaptobrevin family. In terms of processing, palmitoylated; catalyzes its own palmitoylation. Palmitoylation is required for Golgi targeting. Post-translationally, farnesylation is required for Golgi targeting.

It is found in the cytoplasm. The protein localises to the cytosol. It localises to the cytoplasmic vesicle membrane. Its subcellular location is the golgi apparatus membrane. Vesicular soluble NSF attachment protein receptor (v-SNARE) mediating vesicle docking and fusion to a specific acceptor cellular compartment. Functions in endoplasmic reticulum to Golgi transport; as part of a SNARE complex composed of GOSR1, GOSR2 and STX5. Functions in early/recycling endosome to TGN transport; as part of a SNARE complex composed of BET1L, GOSR1 and STX5. Has a S-palmitoyl transferase activity. The protein is Synaptobrevin homolog YKT6-A (ykt6-a) of Xenopus laevis (African clawed frog).